The chain runs to 351 residues: UDP-3-O-acylglucosamine N-acyltransferase (351 aa).

The active-site Proton acceptor is His-240.

Belongs to the transferase hexapeptide repeat family. LpxD subfamily. In terms of assembly, homotrimer.

It carries out the reaction a UDP-3-O-[(3R)-3-hydroxyacyl]-alpha-D-glucosamine + a (3R)-hydroxyacyl-[ACP] = a UDP-2-N,3-O-bis[(3R)-3-hydroxyacyl]-alpha-D-glucosamine + holo-[ACP] + H(+). It participates in bacterial outer membrane biogenesis; LPS lipid A biosynthesis. Functionally, catalyzes the N-acylation of UDP-3-O-acylglucosamine using 3-hydroxyacyl-ACP as the acyl donor. Is involved in the biosynthesis of lipid A, a phosphorylated glycolipid that anchors the lipopolysaccharide to the outer membrane of the cell. This Ectopseudomonas mendocina (strain ymp) (Pseudomonas mendocina) protein is UDP-3-O-acylglucosamine N-acyltransferase.